A 1687-amino-acid polypeptide reads, in one-letter code: Protein TOPAZ1 (1687 aa).

Disordered stretches follow at residues 1-132 (MRRP…PGFD), 596-632 (LSRSGSEVISNTTEDTQLTSDTQSLTGNKKRDRGNLT), and 938-969 (ASEIRHDPKDANTSLGEVANETSENETLGDFS). Over residues 31 to 41 (GAAGGCGPEAG) the composition is skewed to gly residues. Basic and acidic residues predominate over residues 80–113 (RRVEGRRGQVSPSDRRGLEAAKEAEFPLQTERHT). Composition is skewed to polar residues over residues 598–622 (RSGSEVISNTTEDTQLTSDTQSLTG) and 948–963 (ANTSLGEVANETSENE).

Its subcellular location is the cytoplasm. It is found in the cytosol. Important for normal spermatogenesis and male fertility. Specifically required for progression to the post-meiotic stages of spermatocyte development. Seems to be necessary for normal expression levels of a number of testis-expressed gene transcripts, although its role in this process is unclear. The protein is Protein TOPAZ1 (TOPAZ1) of Macaca mulatta (Rhesus macaque).